The following is a 293-amino-acid chain: Sec-independent protein translocase protein TatC (293 aa).

The next 6 membrane-spanning stretches (helical) occupy residues 35–55, 87–107, 123–143, 173–193, 204–224, and 228–248; these read AAIATIIAAIIGTVFLYQPFI, LLKVGMYIGLVIASPVWLYQA, LFGFLTASIFAFACGVAISYF, ILKFVVTFSCAFIIPVILVGI, ILKSWRWVVVLVAVIAALTAP, and IMMMFVLMAPLLIFFFAAIGI.

Belongs to the TatC family. In terms of assembly, the Tat system comprises two distinct complexes: a TatABC complex, containing multiple copies of TatA, TatB and TatC subunits, and a separate TatA complex, containing only TatA subunits. Substrates initially bind to the TatABC complex, which probably triggers association of the separate TatA complex to form the active translocon.

It is found in the cell membrane. In terms of biological role, part of the twin-arginine translocation (Tat) system that transports large folded proteins containing a characteristic twin-arginine motif in their signal peptide across membranes. Together with TatB, TatC is part of a receptor directly interacting with Tat signal peptides. This is Sec-independent protein translocase protein TatC from Rothia mucilaginosa (strain DY-18) (Stomatococcus mucilaginosus).